We begin with the raw amino-acid sequence, 623 residues long: UvrABC system protein C (623 aa).

Residues 21 to 100 (AEPGVYLMRD…IKTHQPPYNV (80 aa)) form the GIY-YIG domain. Residues 210–245 (DELIRELQEKMIQAAEQENYEAAARYRDQIRGLEQL) enclose the UVR domain.

It belongs to the UvrC family. Interacts with UvrB in an incision complex.

The protein resides in the cytoplasm. The UvrABC repair system catalyzes the recognition and processing of DNA lesions. UvrC both incises the 5' and 3' sides of the lesion. The N-terminal half is responsible for the 3' incision and the C-terminal half is responsible for the 5' incision. This Synechococcus sp. (strain JA-2-3B'a(2-13)) (Cyanobacteria bacterium Yellowstone B-Prime) protein is UvrABC system protein C.